The sequence spans 219 residues: Ribose-5-phosphate isomerase A (219 aa).

Residues 28-31, 81-84, and 94-97 each bind substrate; these read TGST, DGAD, and KGGG. The active-site Proton acceptor is the Glu103. Lys121 contributes to the substrate binding site.

Belongs to the ribose 5-phosphate isomerase family. Homodimer.

The enzyme catalyses aldehydo-D-ribose 5-phosphate = D-ribulose 5-phosphate. It functions in the pathway carbohydrate degradation; pentose phosphate pathway; D-ribose 5-phosphate from D-ribulose 5-phosphate (non-oxidative stage): step 1/1. Its function is as follows. Catalyzes the reversible conversion of ribose-5-phosphate to ribulose 5-phosphate. This is Ribose-5-phosphate isomerase A from Photorhabdus laumondii subsp. laumondii (strain DSM 15139 / CIP 105565 / TT01) (Photorhabdus luminescens subsp. laumondii).